A 1178-amino-acid chain; its full sequence is Ubiquitin carboxyl-terminal hydrolase cyk-3 (1178 aa).

3 consecutive EF-hand domains span residues 28–60 (EEYR…GAQI), 175–210 (FPDS…LCRG), and 211–246 (PLPG…LNVP). Residues Asp-188, Asn-190, Asp-192, Gln-194, Glu-199, Asp-224, Asp-226, Asp-228, and Glu-235 each coordinate Ca(2+). One can recognise a DUSP domain in the interval 296-410 (ESRKMELQIV…VDSQFTRKYL (115 aa)). The USP domain occupies 570-1175 (VGLVNYGNFC…GAYLLFYERK (606 aa)). Cys-579 (nucleophile) is an active-site residue. The disordered stretch occupies residues 681-725 (SNKSLHPSPEESEGTDSNKLSDSSKKKEADKEEADEEKAERSWTE). His-1134 functions as the Proton acceptor in the catalytic mechanism.

This sequence belongs to the peptidase C19 family. In terms of tissue distribution, expressed in excretory cells, coelomocytes, head neurons, hypodermal cells, germ cells, oocytes, sperm and pharynx (at protein level).

The protein localises to the nucleus. It is found in the cytoplasm. The protein resides in the cytoskeleton. Its subcellular location is the microtubule organizing center. It carries out the reaction Thiol-dependent hydrolysis of ester, thioester, amide, peptide and isopeptide bonds formed by the C-terminal Gly of ubiquitin (a 76-residue protein attached to proteins as an intracellular targeting signal).. In terms of biological role, ubiquitin-protein hydrolase which cleaves ubiquitin from ubiquitinated proteins. Plays a role in embryo osmoregulation. Probably by regulating osmosis, controls actin redistribution in the 1-cell embryos and thus actin-dependent processes such as cytokinesis and P-granules segregation. During the first embryonic mitotic division, involved in the formation of a functional microtubule organizing center provided by the male pronucleus. Acts as a positive regulator of the mTORC1 signaling. The polypeptide is Ubiquitin carboxyl-terminal hydrolase cyk-3 (Caenorhabditis elegans).